Reading from the N-terminus, the 319-residue chain is uncharacterized protein (319 aa).

Residues 270-290 (AAALWWIPAWLAMIVEVAVLG) form a helical membrane-spanning segment.

The protein resides in the membrane. This is an uncharacterized protein from Mycobacterium tuberculosis (strain CDC 1551 / Oshkosh).